The primary structure comprises 510 residues: GPI mannosyltransferase 3 (510 aa).

7 helical membrane passes run 17-37 (TVLV…KTFF), 96-116 (IAPK…TWKL), 123-143 (PAEA…WFFL), 145-163 (RTFS…LNYW), 179-199 (LFIG…WAVL), 221-241 (VALV…EPVF), and 269-289 (YEAL…GLWI). N-linked (GlcNAc...) asparagine glycosylation is present at Asn-290. The next 2 membrane-spanning stretches (helical) occupy residues 316–336 (FIYP…TQTP) and 342–362 (WLVW…SQVH).

Belongs to the glycosyltransferase 22 family. PIGB subfamily.

The protein localises to the endoplasmic reticulum membrane. The protein operates within glycolipid biosynthesis; glycosylphosphatidylinositol-anchor biosynthesis. In terms of biological role, mannosyltransferase involved in glycosylphosphatidylinositol-anchor biosynthesis. Transfers the third mannose to Man2-GlcN-acyl-PI during GPI precursor assembly. The polypeptide is GPI mannosyltransferase 3 (GPI10) (Yarrowia lipolytica (strain CLIB 122 / E 150) (Yeast)).